Here is a 384-residue protein sequence, read N- to C-terminus: Kinesin-like protein KIF25 (384 aa).

Residues 1–20 (MTWTSGQLQREKQARPGSGA) form a disordered region. The Kinesin motor domain occupies 7–363 (QLQREKQARP…LGFGIRARQV (357 aa)). ATP is bound at residue 65-72 (GQTGSGKS). Disordered regions lie at residues 217 to 256 (DQACSATLPREQTEAGRAGRSRRASQGALAPQLVPGNPAG) and 362 to 384 (QVQRGPARKKPPSSQTEGKRRPD).

The protein belongs to the TRAFAC class myosin-kinesin ATPase superfamily. Kinesin family. In terms of assembly, homotetramer.

It is found in the cytoplasm. The protein resides in the cytoskeleton. It localises to the microtubule organizing center. The protein localises to the centrosome. Functionally, minus-end microtubule-dependent motor protein. Acts as a negative regulator of centrosome separation required to prevent premature centrosome separation during interphase. Required to maintain a centered nucleus to ensure that the spindle is stably oriented at the onset of mitosis. May also act as a negative regulator of amino acid starvation-induced autophagy. The protein is Kinesin-like protein KIF25 of Homo sapiens (Human).